The following is a 160-amino-acid chain: Small ribosomal subunit protein uS7A (160 aa).

The protein belongs to the universal ribosomal protein uS7 family. In terms of assembly, part of the 30S ribosomal subunit. Contacts proteins S9 and S11.

In terms of biological role, one of the primary rRNA binding proteins, it binds directly to 16S rRNA where it nucleates assembly of the head domain of the 30S subunit. Is located at the subunit interface close to the decoding center, probably blocks exit of the E-site tRNA. This chain is Small ribosomal subunit protein uS7A, found in Aquifex aeolicus (strain VF5).